The following is a 388-amino-acid chain: Flap endonuclease 1 (388 aa).

Residues 1 to 105 form an N-domain region; the sequence is MGIKNLTSLI…GELAKRYARR (105 aa). Position 34 (aspartate 34) interacts with Mg(2+). Arginine 71 contacts DNA. 5 residues coordinate Mg(2+): aspartate 87, glutamate 159, glutamate 161, aspartate 180, and aspartate 182. The I-domain stretch occupies residues 123 to 254; that stretch reads DVQKFQKRTI…KKSFDMITKH (132 aa). Glutamate 159 is a DNA binding site. Residues glycine 232 and aspartate 234 each contribute to the DNA site. Residue aspartate 234 coordinates Mg(2+). The segment at 338 to 346 is interaction with PCNA; it reads VQTRIDTFF. The interval 349-388 is disordered; the sequence is IKRPRDEDAGSAKKKQKTVAKPGAAGSKKKPAAKKAAGKK. Residues 375 to 388 are compositionally biased toward basic residues; that stretch reads SKKKPAAKKAAGKK.

It belongs to the XPG/RAD2 endonuclease family. FEN1 subfamily. Interacts with PCNA. Three molecules of repG bind to one PCNA trimer with each molecule binding to one PCNA monomer. PCNA stimulates the nuclease activity without altering cleavage specificity. Mg(2+) serves as cofactor. Post-translationally, phosphorylated. Phosphorylation upon DNA damage induces relocalization to the nuclear plasma.

Its subcellular location is the nucleus. The protein localises to the nucleolus. It localises to the nucleoplasm. It is found in the mitochondrion. Its function is as follows. Structure-specific nuclease with 5'-flap endonuclease and 5'-3' exonuclease activities involved in DNA replication and repair. During DNA replication, cleaves the 5'-overhanging flap structure that is generated by displacement synthesis when DNA polymerase encounters the 5'-end of a downstream Okazaki fragment. It enters the flap from the 5'-end and then tracks to cleave the flap base, leaving a nick for ligation. Also involved in the long patch base excision repair (LP-BER) pathway, by cleaving within the apurinic/apyrimidinic (AP) site-terminated flap. Acts as a genome stabilization factor that prevents flaps from equilibrating into structures that lead to duplications and deletions. Also possesses 5'-3' exonuclease activity on nicked or gapped double-stranded DNA, and exhibits RNase H activity. Also involved in replication and repair of rDNA and in repairing mitochondrial DNA. The chain is Flap endonuclease 1 from Heterostelium pallidum (strain ATCC 26659 / Pp 5 / PN500) (Cellular slime mold).